Here is a 192-residue protein sequence, read N- to C-terminus: Cytochrome c4 (192 aa).

Cytochrome c domains follow at residues 12–90 and 99–191; these read GDPQ…ATQP and ELAS…QGLS. Residues C25, C28, H29, C120, C123, and H124 each contribute to the heme c site.

Post-translationally, binds 2 heme c groups covalently per subunit.

It localises to the periplasm. In terms of biological role, diheme, high potential cytochrome c believed to be an intermediate electron donor in an anaerobic electron transport chain. This is Cytochrome c4 from Thiocapsa roseopersicina.